We begin with the raw amino-acid sequence, 253 residues long: Dihydroanticapsin 7-dehydrogenase (253 aa).

9–31 (LITGGASGIGYAAVQAFLGQQAN) lines the NAD(+) pocket. A substrate-binding site is contributed by serine 139. Tyrosine 152 acts as the Proton acceptor in catalysis.

The protein belongs to the short-chain dehydrogenases/reductases (SDR) family.

It catalyses the reaction L-dihydroanticapsin + NAD(+) = L-anticapsin + NADH + H(+). Its pathway is antibiotic biosynthesis; bacilysin biosynthesis. Its function is as follows. Part of the bacABCDEFG operon responsible for the biosynthesis of bacilysin, an irreversible inactivator of the glutaminase domain of glucosamine synthetase. Catalyzes the dehydrogenation of the C7-hydroxyl group in the 4S-tetrahydrotyrosine (4S-H4Tyr) to yield anticapsin (epoxycyclohexanonyl-Ala). It is not able to oxidize the 4R-H4Tyr diastereomer and the dihydrobacilysin dipeptide (L-Ala-4S-H4Tyr dipeptide). The chain is Dihydroanticapsin 7-dehydrogenase from Bacillus subtilis (strain 168).